We begin with the raw amino-acid sequence, 491 residues long: G2/mitotic-specific cyclin-2 (491 aa).

Ser-2 is subject to N-acetylserine. 2 disordered regions span residues 59 to 107 (EGSR…DPSS) and 164 to 184 (HPAR…SGKK). Over residues 67–77 (TRESVSRSTAA) the composition is skewed to polar residues.

This sequence belongs to the cyclin family. Cyclin AB subfamily. In terms of assembly, interacts with NAP1.

Its function is as follows. Essential for the control of the cell cycle at the G2/M (mitosis) transition. Interacts with the CDC2 protein kinase to form MPF. G2/M cyclins accumulate steadily during G2 and are abruptly destroyed at mitosis. This is G2/mitotic-specific cyclin-2 (CLB2) from Saccharomyces cerevisiae (strain ATCC 204508 / S288c) (Baker's yeast).